Consider the following 381-residue polypeptide: MAGREKRRRVAALDGEERRRRQEEAATLLHRIRGLVRWVVAEVAAGRSPTVALHRYQNYCSSASAAAASPCACSYDVPVGTDVLSLLHRGSHASRLNVLLRVLLVVQQLLQQNKHCSKRDIYYMYPSIFQEQAVVDRAINDICVLFKCSRHNLNVVPVAKGLVMGWIRFLEGEKEVYCVTNVNAAFSIPVSIEAIKDVVSVADYILIVEKETVFQRLANDKFCERNRCIVITGRGYPDIPTRRFLRYLVEQLHLPVYCLVDADPYGFDILATYKFGSLQLAYDANFLRVPDIRWLGVFTSDFEDYRLPDCCLLHLSSEDRRKAEGILSRCYLHREAPQWRLELEAMLQKGVKFEIEALSACSISFLSEEYIPKKIKQGRHI.

The region spanning Glu-23–Leu-162 is the Topo IIA-type catalytic domain. Tyr-123 acts as the O-(5'-phospho-DNA)-tyrosine intermediate in catalysis. Residues Glu-209 and Asp-261 each contribute to the Mg(2+) site.

Belongs to the TOP6A family. It depends on Mg(2+) as a cofactor. In terms of tissue distribution, highly expressed in flowers before pollination. Expressed in roots and shoots.

The protein localises to the nucleus. It catalyses the reaction ATP-dependent breakage, passage and rejoining of double-stranded DNA.. Its function is as follows. Required for meiotic recombination. Mediates DNA cleavage that forms the double-strand breaks (DSB) that initiate meiotic recombination. May be involved in plant growth and development, and stress tolerance. This Oryza sativa subsp. indica (Rice) protein is Meiotic recombination protein SPO11-1 (SPO11-1).